The following is a 216-amino-acid chain: Ras-related protein Rab-11A (216 aa).

At G2 the chain carries N-acetylglycine. Residues S20, G21, V22, G23, K24, S25, N26, N37, L38, S40, S42, and T43 each contribute to the GTP site. S25 is a Mg(2+) binding site. A Switch 1 motif is present at residues 36–47; the sequence is FNLESKSTIGVE. Positions 43 and 66 each coordinate Mg(2+). Positions 67–86 match the Switch 2 motif; the sequence is TAGQERYRAITSAYYRGAVG. G69, N124, K125, D127, A155, and L156 together coordinate GTP. The segment at 183-207 is disordered; sequence DRRENDMSPSNNVVPIHVPPTTENK. S-geranylgeranyl cysteine attachment occurs at residues C212 and C213. At C213 the chain carries Cysteine methyl ester. Positions 214 to 216 are cleaved as a propeptide — removed in mature form; sequence QNI.

It belongs to the small GTPase superfamily. Rab family. Interacts (GTP-bound form) with RAB11FIPs (via their C-termini) including RAB11FIP1, RAB11FIP2, RAB11FIP3, RAB11FIP4 and RAB11FIP5 effectors. Forms a complex with RAB11FIP3 and dynein intermediate chain DYNC1LI1; the interaction between RAB11A1 and RAB11FIP3 is direct; the complex regulates endocytic trafficking. Interacts with EVI5; EVI5 and RAB11FIP3 may be mutually exclusive and compete for binding RAB11A. Interacts with SGSM1, SGSM2, SGSM3 and VIPAS39. Interacts with EXOC6 in a GTP-dependent manner. Interacts with RAB11FIP5. Interacts with STXBP6. Interacts (GDP-bound form) with ZFYVE27. Interacts with BIRC6/bruce. May interact with TBC1D14. Interacts with UNC119; in a cell cycle-dependent manner. GDP-bound and nucleotide-free forms interact with SH3BP5. Interacts (GDP-bound form) with KIF5A in a ZFYVE27-dependent manner. Interacts (GDP-bound form) with RELCH. Found in a complex composed of RELCH, OSBP1 and RAB11A. Interacts with TBC1D12. Interacts with DEF6. Interacts with ATP9A. Forms a heterotetramer with RAB11FIP3; the GTP-bound form is preferred for binding. Forms a complex with Rabin8/RAB3IP and RAB11FIP3, probably a heterohexamer with two of each protein subunit, where Rabin8/RAB3IP and RAB11FIP3 simultaneously bind to RAB11A; the complex promotes preciliary trafficking and cilia growth. Forms a complex containing RAB11A, ASAP1, Rabin8/RAB3IP, RAP11FIP3 and ARF4; the complex promotes preciliary trafficking; the complex binds to RHO in photoreceptor cells and promotes RHO ciliary transport. Interacts (GTP-bound form) with WDR44; the interaction prevents RAB11A-RAB3IP-RAB11FIP3 complex formation. The cofactor is Mg(2+).

Its subcellular location is the cell membrane. The protein resides in the endosome membrane. The protein localises to the recycling endosome membrane. It localises to the cleavage furrow. It is found in the cytoplasmic vesicle. Its subcellular location is the phagosome. The protein resides in the cytoplasmic vesicle membrane. The protein localises to the golgi apparatus. It localises to the trans-Golgi network. It catalyses the reaction GTP + H2O = GDP + phosphate + H(+). With respect to regulation, regulated by guanine nucleotide exchange factors (GEFs) which promote the exchange of bound GDP for free GTP. Regulated by GTPase activating proteins (GAPs) which increase the GTP hydrolysis activity. Inhibited by GDP dissociation inhibitors (GDIs) which prevent Rab-GDP dissociation. Functionally, the small GTPases Rab are key regulators of intracellular membrane trafficking, from the formation of transport vesicles to their fusion with membranes. Rabs cycle between an inactive GDP-bound form and an active GTP-bound form that is able to recruit to membranes different set of downstream effectors directly responsible for vesicle formation, movement, tethering and fusion. The small Rab GTPase RAB11A regulates endocytic recycling. Forms a functional Rab11/RAB11FIP3/dynein complex that regulates the movement of peripheral sorting endosomes (SE) along microtubule tracks toward the microtubule organizing center/centrosome, generating the endosomal recycling compartment (ERC). Acts as a major regulator of membrane delivery during cytokinesis. Together with MYO5B and RAB8A participates in epithelial cell polarization. Together with Rabin8/RAB3IP, RAB8A, the exocyst complex, PARD3, PRKCI, ANXA2, CDC42 and DNMBP promotes transcytosis of PODXL to the apical membrane initiation sites (AMIS), apical surface formation and lumenogenesis. Together with MYO5B participates in CFTR trafficking to the plasma membrane and TF (Transferrin) recycling in nonpolarized cells. Required in a complex with MYO5B and RAB11FIP2 for the transport of NPC1L1 to the plasma membrane. Participates in the sorting and basolateral transport of CDH1 from the Golgi apparatus to the plasma membrane. Regulates the recycling of FCGRT (receptor of Fc region of monomeric IgG) to basolateral membranes. May also play a role in melanosome transport and release from melanocytes. Promotes Rabin8/RAB3IP preciliary vesicular trafficking to mother centriole by forming a ciliary targeting complex containing Rab11, ASAP1, Rabin8/RAB3IP, RAB11FIP3 and ARF4, thereby regulating ciliogenesis initiation. On the contrary, upon LPAR1 receptor signaling pathway activation, interaction with phosphorylated WDR44 prevents Rab11-RAB3IP-RAB11FIP3 complex formation and cilia growth. Participates in the export of a subset of neosynthesized proteins through a Rab8-Rab10-Rab11-endososomal dependent export route via interaction with WDR44. The polypeptide is Ras-related protein Rab-11A (Bos taurus (Bovine)).